Reading from the N-terminus, the 372-residue chain is Tribbles homolog 1 (372 aa).

Disordered regions lie at residues 1–26 (MRVG…FPAA) and 49–85 (RLSE…CVSS). The segment covering 59–74 (YLSPPGSPCSPQPPPS) has biased composition (pro residues). In terms of domain architecture, Protein kinase spans 91–338 (IADYLLLPLA…APQILLHPWF (248 aa)). The short motif at 355 to 360 (DQIVPE) is the COP1-binding element.

The protein belongs to the protein kinase superfamily. CAMK Ser/Thr protein kinase family. Tribbles subfamily. As to quaternary structure, monomer. Interacts (via protein kinase domain) with CEBPA. Interacts with COP1.

Its function is as follows. Adapter protein involved in protein degradation by interacting with COP1 ubiquitin ligase. Promotes CEBPA degradation and inhibits its function. Controls macrophage, eosinophil and neutrophil differentiation via the COP1-binding domain. Regulates myeloid cell differentiation by altering the expression of CEBPA in a COP1-dependent manner. Interacts with MAPK kinases and regulates activation of MAP kinases, but has no kinase activity. The protein is Tribbles homolog 1 of Mus musculus (Mouse).